Here is a 553-residue protein sequence, read N- to C-terminus: Copine-9 (553 aa).

C2 domains are found at residues 1 to 125 and 132 to 255; these read MSLS…ERPL and KCGT…FTVY. D163, D169, D225, D227, and D233 together coordinate Ca(2+). Residues 299 to 500 enclose the VWFA domain; the sequence is NFTVAIDFTA…VQFVPFRDYV (202 aa). The tract at residues 531-553 is disordered; the sequence is TRDIQPRPPPPVSPNPTPAPEQP. Residues 536-553 show a composition bias toward pro residues; that stretch reads PRPPPPVSPNPTPAPEQP.

Belongs to the copine family. It depends on Ca(2+) as a cofactor.

Functionally, probable calcium-dependent phospholipid-binding protein that may play a role in calcium-mediated intracellular processes. Plays a role in dendrite formation by melanocytes. This Mus musculus (Mouse) protein is Copine-9.